The chain runs to 186 residues: Intraflagellar transport protein 27 homolog (186 aa).

GTP contacts are provided by residues 12–19, 64–68, and 123–126; these read GDPTVGKT, DSAGK, and NKTD.

It belongs to the small GTPase superfamily. Rab family. In terms of assembly, component of the IFT complex B, at least composed of IFT20, IFT22, IFT25, IFT27, IFT46, IFT52, TRAF3IP1/IFT54, IFT57, IFT74, IFT80, IFT81, and IFT88. Interacts with IFT25. Interacts with IFT70B. Interacts with RABL2/RABL2A; binding is equal in the presence of GTP or GDP. Interacts with IFT88. Interacts with ARL6; recognizes and binds with the GTP-free form of ARL6.

It localises to the cell projection. The protein localises to the cilium. It is found in the cytoplasm. Its subcellular location is the flagellum. In terms of biological role, small GTPase-like component of the intraflagellar transport (IFT) complex B that promotes the exit of the BBSome complex from cilia via its interaction with ARL6. Not involved in entry of the BBSome complex into cilium. Prevents aggregation of GTP-free ARL6. Required for hedgehog signaling. Forms a subcomplex within the IFT complex B with IFT25. Its role in intraflagellar transport is mainly seen in tissues rich in ciliated cells such as kidney and testis. Essential for male fertility, spermiogenesis and sperm flagella formation. Plays a role in the early development of the kidney. May be involved in the regulation of ureteric bud initiation. The protein is Intraflagellar transport protein 27 homolog (IFT27) of Bos taurus (Bovine).